The primary structure comprises 392 residues: GTPase Obg (392 aa).

An Obg domain is found at 1–159 (MKFVDEATIL…RDLQLELMLL (159 aa)). The segment at 127-146 (NTRFKSSVNRTPRQKTMGTP) is disordered. A compositionally biased stretch (polar residues) spans 129–143 (RFKSSVNRTPRQKTM). The 174-residue stretch at 160–333 (ADVGMLGLPN…LCWDVMAFIK (174 aa)) folds into the OBG-type G domain. GTP is bound by residues 166-173 (GLPNAGKS), 191-195 (FTTLV), 213-216 (DIPG), 283-286 (NKVD), and 314-316 (SAA). Positions 173 and 193 each coordinate Mg(2+). A disordered region spans residues 360–392 (QLEEAQPEVEEDDDWDDDWDEDDEEGVETIYQR). Acidic residues predominate over residues 364 to 386 (AQPEVEEDDDWDDDWDEDDEEGV).

The protein belongs to the TRAFAC class OBG-HflX-like GTPase superfamily. OBG GTPase family. As to quaternary structure, monomer. The cofactor is Mg(2+).

The protein localises to the cytoplasm. In terms of biological role, an essential GTPase which binds GTP, GDP and possibly (p)ppGpp with moderate affinity, with high nucleotide exchange rates and a fairly low GTP hydrolysis rate. Plays a role in control of the cell cycle, stress response, ribosome biogenesis and in those bacteria that undergo differentiation, in morphogenesis control. The chain is GTPase Obg from Erwinia tasmaniensis (strain DSM 17950 / CFBP 7177 / CIP 109463 / NCPPB 4357 / Et1/99).